Here is a 206-residue protein sequence, read N- to C-terminus: Imidazole glycerol phosphate synthase subunit HisH (206 aa).

The Glutamine amidotransferase type-1 domain occupies 5 to 206 (SVVVLDYGSG…AVLRNWIERL (202 aa)). Catalysis depends on cysteine 83, which acts as the Nucleophile. Residues histidine 187 and glutamate 189 contribute to the active site.

As to quaternary structure, heterodimer of HisH and HisF.

It localises to the cytoplasm. It catalyses the reaction 5-[(5-phospho-1-deoxy-D-ribulos-1-ylimino)methylamino]-1-(5-phospho-beta-D-ribosyl)imidazole-4-carboxamide + L-glutamine = D-erythro-1-(imidazol-4-yl)glycerol 3-phosphate + 5-amino-1-(5-phospho-beta-D-ribosyl)imidazole-4-carboxamide + L-glutamate + H(+). The enzyme catalyses L-glutamine + H2O = L-glutamate + NH4(+). It participates in amino-acid biosynthesis; L-histidine biosynthesis; L-histidine from 5-phospho-alpha-D-ribose 1-diphosphate: step 5/9. In terms of biological role, IGPS catalyzes the conversion of PRFAR and glutamine to IGP, AICAR and glutamate. The HisH subunit catalyzes the hydrolysis of glutamine to glutamate and ammonia as part of the synthesis of IGP and AICAR. The resulting ammonia molecule is channeled to the active site of HisF. The polypeptide is Imidazole glycerol phosphate synthase subunit HisH (Mycolicibacterium paratuberculosis (strain ATCC BAA-968 / K-10) (Mycobacterium paratuberculosis)).